Reading from the N-terminus, the 78-residue chain is Acyl carrier protein (78 aa).

The Carrier domain maps to 4 to 78 (AQIKEKVYDI…QQAIDYIVKK (75 aa)). O-(pantetheine 4'-phosphoryl)serine is present on Ser39.

The protein belongs to the acyl carrier protein (ACP) family. Post-translationally, 4'-phosphopantetheine is transferred from CoA to a specific serine of apo-ACP by AcpS. This modification is essential for activity because fatty acids are bound in thioester linkage to the sulfhydryl of the prosthetic group.

It is found in the cytoplasm. The protein operates within lipid metabolism; fatty acid biosynthesis. Its function is as follows. Carrier of the growing fatty acid chain in fatty acid biosynthesis. In Chlorobium phaeobacteroides (strain DSM 266 / SMG 266 / 2430), this protein is Acyl carrier protein.